The sequence spans 399 residues: Elongation factor Tu (399 aa).

A tr-type G domain is found at 10–204 (KPHVNIGTIG…AVDANIPEPE (195 aa)). Residues 19 to 26 (GHVDHGKT) are G1. 19–26 (GHVDHGKT) is a GTP binding site. Residue Thr26 coordinates Mg(2+). Residues 60-64 (GITIN) are G2. Residues 81–84 (DCPG) are G3. Residues 81 to 85 (DCPGH) and 136 to 139 (NKCD) each bind GTP. Residues 136–139 (NKCD) form a G4 region. The segment at 174–176 (SGL) is G5.

This sequence belongs to the TRAFAC class translation factor GTPase superfamily. Classic translation factor GTPase family. EF-Tu/EF-1A subfamily. In terms of assembly, monomer.

It localises to the cytoplasm. The enzyme catalyses GTP + H2O = GDP + phosphate + H(+). Functionally, GTP hydrolase that promotes the GTP-dependent binding of aminoacyl-tRNA to the A-site of ribosomes during protein biosynthesis. The chain is Elongation factor Tu from Synechococcus sp. (strain WH7803).